A 115-amino-acid chain; its full sequence is MEVAAKLKYARISAQKARLVADQVRGLGAEQAVNLLRFSNKKAAALMKKVLNSAIANAEHNEGADIDELKVSTVMVDEGPSARRFHARARGRANQILKRTCHITVKVSDSQVEND.

Belongs to the universal ribosomal protein uL22 family. As to quaternary structure, part of the 50S ribosomal subunit.

This protein binds specifically to 23S rRNA; its binding is stimulated by other ribosomal proteins, e.g. L4, L17, and L20. It is important during the early stages of 50S assembly. It makes multiple contacts with different domains of the 23S rRNA in the assembled 50S subunit and ribosome. Functionally, the globular domain of the protein is located near the polypeptide exit tunnel on the outside of the subunit, while an extended beta-hairpin is found that lines the wall of the exit tunnel in the center of the 70S ribosome. The sequence is that of Large ribosomal subunit protein uL22 from Coxiella burnetii (strain CbuK_Q154) (Coxiella burnetii (strain Q154)).